A 568-amino-acid polypeptide reads, in one-letter code: DEAD-box ATP-dependent RNA helicase 51 (568 aa).

Basic and acidic residues-rich tracts occupy residues 1–13 (MVES…EELK) and 23–47 (KKNE…TQKK). The disordered stretch occupies residues 1–70 (MVESDKSSVE…EEEEKVEAME (70 aa)). A coiled-coil region spans residues 13 to 78 (KKRVRKRSRG…MEDGEDEKNI (66 aa)). Residues 60–70 (EEEEEKVEAME) are compositionally biased toward acidic residues. The short motif at 89 to 117 (VTFDSLDLSEQTSIAIKEMGFQYMTQIQA) is the Q motif element. The Helicase ATP-binding domain occupies 120 to 295 (IQPLLEGKDV…RVSLTSPVHV (176 aa)). 133–140 (ARTGSGKT) contributes to the ATP binding site. The DEAD box motif lies at 243–246 (DEAD). The Helicase C-terminal domain occupies 321 to 468 (RLILLISFLK…ELEFNEKRLS (148 aa)). The segment at 540–568 (KVRKARKQQGRNGFSPYSPYGKSTPTKEA) is disordered.

It belongs to the DEAD box helicase family. DDX18/HAS1 subfamily.

The enzyme catalyses ATP + H2O = ADP + phosphate + H(+). The sequence is that of DEAD-box ATP-dependent RNA helicase 51 (RH51) from Arabidopsis thaliana (Mouse-ear cress).